The following is a 361-amino-acid chain: Blue-sensitive opsin (361 aa).

At 1–43 (MHPPRPTTDLPEDFYIPMALDAPNITALSPFLVPQTHLGSPGL) the chain is on the extracellular side. Asn-24 carries N-linked (GlcNAc...) asparagine glycosylation. The helical transmembrane segment at 44 to 68 (FRAMAAFMFLLIALGVPINTLTIFC) threads the bilayer. Over 69–80 (TARFRKLRSHLN) the chain is Cytoplasmic. A helical transmembrane segment spans residues 81–106 (YILVNLALANLLVILVGSTTACYSFS). Residues 107–120 (QMYFALGPTACKIE) are Extracellular-facing. Residues Cys-117 and Cys-194 are joined by a disulfide bond. The chain crosses the membrane as a helical span at residues 121–140 (GFAATLGGMVSLWSLAVVAF). Over 141–159 (ERFLVICKPLGNFTFRGSH) the chain is Cytoplasmic. Residues 160–183 (AVLGCVATWVLGFVASAPPLFGWS) traverse the membrane as a helical segment. Over 184 to 209 (RYIPEGLQCSCGPDWYTTDNKWHNES) the chain is Extracellular. The helical transmembrane segment at 210–237 (YVLFLFTFCFGVPLAIIVFSYGRLLITL) threads the bilayer. At 238–259 (RAVARQQEQSATTQKADREVTK) the chain is on the cytoplasmic side. A helical membrane pass occupies residues 260 to 283 (MVVVMVLGFLVCWAPYTAFALWVV). Over 284-291 (THRGRSFE) the chain is Extracellular. Residues 292-316 (VGLASIPSVFSKSSTVYNPVIYVLM) traverse the membrane as a helical segment. Lys-303 is modified (N6-(retinylidene)lysine). Over 317-361 (NKQFRSCMLKLLFCGRSPFGDDEDVSGSSQATQVSSVSSSHVAPA) the chain is Cytoplasmic. A disordered region spans residues 338–361 (DEDVSGSSQATQVSSVSSSHVAPA). Residues 342 to 361 (SGSSQATQVSSVSSSHVAPA) show a composition bias toward low complexity.

Belongs to the G-protein coupled receptor 1 family. Opsin subfamily. In terms of processing, phosphorylated on some or all of the serine and threonine residues present in the C-terminal region. As to expression, the color pigments are found in the cone photoreceptor cells.

It localises to the membrane. Functionally, visual pigments are the light-absorbing molecules that mediate vision. They consist of an apoprotein, opsin, covalently linked to cis-retinal. This Gallus gallus (Chicken) protein is Blue-sensitive opsin.